Here is a 432-residue protein sequence, read N- to C-terminus: Homogentisate 1,2-dioxygenase (432 aa).

Catalysis depends on His286, which acts as the Proton acceptor. Residues His329 and Glu335 each contribute to the Fe cation site. The homogentisate site is built by Tyr344 and His365. Fe cation is bound at residue His365.

The protein belongs to the homogentisate dioxygenase family. Hexamer; dimer of trimers. Fe cation serves as cofactor.

The catalysed reaction is homogentisate + O2 = 4-maleylacetoacetate + H(+). It functions in the pathway amino-acid degradation; L-phenylalanine degradation; acetoacetate and fumarate from L-phenylalanine: step 4/6. In terms of biological role, involved in the catabolism of homogentisate (2,5-dihydroxyphenylacetate or 2,5-OH-PhAc), a central intermediate in the degradation of phenylalanine and tyrosine. Catalyzes the oxidative ring cleavage of the aromatic ring of homogentisate to yield maleylacetoacetate. This is Homogentisate 1,2-dioxygenase from Bordetella bronchiseptica (strain ATCC BAA-588 / NCTC 13252 / RB50) (Alcaligenes bronchisepticus).